The following is a 222-amino-acid chain: Inositol diphosphatase DSP1 (222 aa).

Over residues 1 to 14 (MRQEATCSLVLTQD) the composition is skewed to polar residues. The segment at 1–41 (MRQEATCSLVLTQDAQHRKNQPPLAEEDDDRDHTDDAMPPP) is disordered. The region spanning 68–222 (NFAMVDHGVY…LKHLPASFSC (155 aa)) is the Tyrosine-protein phosphatase domain. The tract at residues 124 to 136 (FGIDGSKEPFVNI) is WPD loop important for active site topology. Residues Asn135, Ile136, and Arg140 each contribute to the 1D-myo-inositol hexakisphosphate site. Cys160 (phosphocysteine intermediate) is an active-site residue.

Belongs to the protein-tyrosine phosphatase family. Atypical dual-specificity phosphatase Siw14-like subfamily.

Its subcellular location is the nucleus. The protein localises to the cytoplasm. The catalysed reaction is 5-diphospho-1D-myo-inositol 1,2,3,4,6-pentakisphosphate + H2O = 1D-myo-inositol hexakisphosphate + phosphate + H(+). It catalyses the reaction 1,5-bis(diphospho)-1D-myo-inositol 2,3,4,6-tetrakisphosphate + H2O = 1-diphospho-1D-myo-inositol 2,3,4,5,6-pentakisphosphate + phosphate + 2 H(+). It carries out the reaction 3,5-bis(diphospho)-1D-myo-inositol 1,2,4,6-tetrakisphosphate + H2O = 3-diphospho-1D-myo-inositol 1,2,4,5,6-pentakisphosphate + phosphate + 2 H(+). The enzyme catalyses 6-diphospho-1D-myo-inositol pentakisphosphate + H2O = 1D-myo-inositol hexakisphosphate + phosphate + H(+). Cleaves the beta-phosphate at the 5-position of soluble inositol pyrophosphates. Has highest activity on 5-diphosphoinositol 1,2,3,4,6-pentakisphosphate (5-InsP(7)). Possesses phosphotyrosine phosphatase activity in vitro. May contribute to regulation of drought stress responses. This is Inositol diphosphatase DSP1 from Oryza sativa subsp. japonica (Rice).